The chain runs to 206 residues: Large ribosomal subunit protein uL4 (206 aa).

A disordered region spans residues 45–76 (RQGTQSAKTRTEVSGGGIKPWRQKGTGRARQG).

This sequence belongs to the universal ribosomal protein uL4 family. Part of the 50S ribosomal subunit.

Its function is as follows. One of the primary rRNA binding proteins, this protein initially binds near the 5'-end of the 23S rRNA. It is important during the early stages of 50S assembly. It makes multiple contacts with different domains of the 23S rRNA in the assembled 50S subunit and ribosome. Forms part of the polypeptide exit tunnel. The chain is Large ribosomal subunit protein uL4 from Clostridium acetobutylicum (strain ATCC 824 / DSM 792 / JCM 1419 / IAM 19013 / LMG 5710 / NBRC 13948 / NRRL B-527 / VKM B-1787 / 2291 / W).